A 233-amino-acid polypeptide reads, in one-letter code: Tetrahydromethanopterin S-methyltransferase subunit D (233 aa).

A run of 6 helical transmembrane segments spans residues 4–24, 39–59, 67–87, 133–153, 166–186, and 209–229; these read LLLIGAITAGGVLIGGGVHFV, VGTGTAMLAAGAGLTGLITAA, LMIMAAGAVGSMLMIGITMLV, FVSGIIGGALGGIGGGLIYWA, MGAAGVAAIFAVGIFFINAVI, and GIVACLIASIVAGALSTLLVY.

The protein belongs to the MtrD family. The complex is composed of 8 subunits; MtrA, MtrB, MtrC, MtrD, MtrE, MtrF, MtrG and MtrH.

It localises to the cell membrane. It catalyses the reaction 5-methyl-5,6,7,8-tetrahydromethanopterin + coenzyme M + 2 Na(+)(in) = 5,6,7,8-tetrahydromethanopterin + methyl-coenzyme M + 2 Na(+)(out). It participates in one-carbon metabolism; methanogenesis from CO(2); methyl-coenzyme M from 5,10-methylene-5,6,7,8-tetrahydromethanopterin: step 2/2. In terms of biological role, part of a complex that catalyzes the formation of methyl-coenzyme M and tetrahydromethanopterin from coenzyme M and methyl-tetrahydromethanopterin. This is an energy-conserving, sodium-ion translocating step. This Methanothermobacter marburgensis (strain ATCC BAA-927 / DSM 2133 / JCM 14651 / NBRC 100331 / OCM 82 / Marburg) (Methanobacterium thermoautotrophicum) protein is Tetrahydromethanopterin S-methyltransferase subunit D.